The following is a 313-amino-acid chain: MTDASINASMTREEEASLGDYFALLKPRVMSLVVFTAFVGLMAAPIGVHPVIGFCAILFIAIGGGASGALNMWWDADIDQVMKRTKGRPIPAGKVDKGEALSLGLALSGLSVIMLALATNVFAGAFLAFTIFFYVVIYTMWLKRATPQNIVIGGAAGAFPPVIGWIAATGSMSVEPWLMFALTFLWTPPHFWALALFMRNDYDMADVPMLTVTHGRRSTRKHILVYTVILAAFALTTAFTSVGGPIYLTTAVVLNALFLKGAVQIWRRDEEICESDNFKIERSFFKLSLLYLFLHFGAILAEALLKPYGLGGW.

9 helical membrane-spanning segments follow: residues 22–42 (FALL…VGLM), 46–66 (IGVH…GGGA), 98–118 (GEAL…LALA), 121–141 (VFAG…YTMW), 150–170 (IVIG…AATG), 177–197 (WLMF…LALF), 223–243 (ILVY…TSVG), 246–266 (IYLT…VQIW), and 284–304 (FFKL…AEAL).

The protein belongs to the UbiA prenyltransferase family. Protoheme IX farnesyltransferase subfamily. In terms of assembly, interacts with CtaA.

Its subcellular location is the cell inner membrane. It carries out the reaction heme b + (2E,6E)-farnesyl diphosphate + H2O = Fe(II)-heme o + diphosphate. Its pathway is porphyrin-containing compound metabolism; heme O biosynthesis; heme O from protoheme: step 1/1. Converts heme B (protoheme IX) to heme O by substitution of the vinyl group on carbon 2 of heme B porphyrin ring with a hydroxyethyl farnesyl side group. The protein is Protoheme IX farnesyltransferase of Ruegeria sp. (strain TM1040) (Silicibacter sp.).